Reading from the N-terminus, the 124-residue chain is Holo-[acyl-carrier-protein] synthase (124 aa).

D8 and E55 together coordinate Mg(2+).

It belongs to the P-Pant transferase superfamily. AcpS family. Requires Mg(2+) as cofactor.

It is found in the cytoplasm. The enzyme catalyses apo-[ACP] + CoA = holo-[ACP] + adenosine 3',5'-bisphosphate + H(+). Functionally, transfers the 4'-phosphopantetheine moiety from coenzyme A to a Ser of acyl-carrier-protein. This chain is Holo-[acyl-carrier-protein] synthase, found in Desulfovibrio desulfuricans (strain ATCC 27774 / DSM 6949 / MB).